The primary structure comprises 78 residues: Chassatide C4 (78 aa).

The N-terminal stretch at 1-23 is a signal peptide; the sequence is MAKFATQLFLLTASVVMLEVQSS. A propeptide spans 24-42 (removed in mature form); that stretch reads IVIMQDPDLGRKLIMNPAN. The segment at residues 43–71 is a cross-link (cyclopeptide (Gly-Asn)); that stretch reads GASCGETCFTGICFTAGCSCNPWPTCTRN. Intrachain disulfides connect cysteine 46/cysteine 60, cysteine 50/cysteine 62, and cysteine 55/cysteine 68. A propeptide spans 72–78 (removed in mature form); the sequence is GLNPESI.

This is a cyclic peptide.

Functionally, probably participates in a plant defense mechanism. In Chassalia chartacea (Chassalia curviflora), this protein is Chassatide C4.